Here is a 166-residue protein sequence, read N- to C-terminus: Regulatory protein RecX (166 aa).

This sequence belongs to the RecX family.

It localises to the cytoplasm. In terms of biological role, modulates RecA activity. The polypeptide is Regulatory protein RecX (Escherichia coli (strain SMS-3-5 / SECEC)).